Consider the following 316-residue polypeptide: MIIGTRGSQLALAQTENVARLLKEKGVETSIKIIKTSGDRFTDRPLHAVSGGVGAFVRELDDVMLAGEIDIAVHSMKDMPTIRPKAIPTVAVLKRDTPFDILLTYDGTPLDELPEQSIIGTSSLRRTAQIRRYRPDIITQNLRGNIDTRLRKLREGQYDGIMLAKAGLERMGWEIEGEIFSPDFFCPSPNQGTVAVVTREGTEAEAAVSMLDHTESRIVTEIERILIAELGGGCTTPVGSYAEITPDRQEIHVRAEVLSLDGREAIRIDEFIPLRGGIEKARELGHRLVEMGGRRLAEEALLQISRGADSENSCDY.

S-(dipyrrolylmethanemethyl)cysteine is present on C234.

Belongs to the HMBS family. Dipyrromethane is required as a cofactor.

It catalyses the reaction 4 porphobilinogen + H2O = hydroxymethylbilane + 4 NH4(+). Its pathway is porphyrin-containing compound metabolism; protoporphyrin-IX biosynthesis; coproporphyrinogen-III from 5-aminolevulinate: step 2/4. Its function is as follows. Tetrapolymerization of the monopyrrole PBG into the hydroxymethylbilane pre-uroporphyrinogen in several discrete steps. The chain is Probable porphobilinogen deaminase from Methanosarcina mazei (strain ATCC BAA-159 / DSM 3647 / Goe1 / Go1 / JCM 11833 / OCM 88) (Methanosarcina frisia).